Here is a 232-residue protein sequence, read N- to C-terminus: Peroxisomal protein PEX21 (232 aa).

Residue Cys-5 forms a Glycyl cysteine thioester (Cys-Gly) (interchain with G-Cter in ubiquitin) linkage.

Belongs to the peroxin-21 family. As to quaternary structure, interacts with PEX7. In terms of processing, monoubiquitinated at Cys-5; acts as a signal for PEX21 extraction and is required for proper export from peroxisomes and recycling.

Its subcellular location is the cytoplasm. The protein localises to the cytosol. The protein resides in the peroxisome. Mediates peroxisomal import of proteins containing a C-terminal PTS2-type peroxisomal targeting signal via its interaction with PEX7. Interaction with PEX7 only takes place when PEX7 is associated with cargo proteins containing a PTS2 peroxisomal targeting signal. PEX7 along with PTS2-containing cargo proteins are then translocated through the PEX13-PEX14 docking complex together with PEX21. The sequence is that of Peroxisomal protein PEX21 (PEX21) from Candida glabrata (strain ATCC 2001 / BCRC 20586 / JCM 3761 / NBRC 0622 / NRRL Y-65 / CBS 138) (Yeast).